The sequence spans 217 residues: Adenylate kinase (217 aa).

Position 10 to 15 (10 to 15) interacts with ATP; it reads GAGKGT. Positions 30-59 are NMP; sequence STGDMLREAVAKGTELGKKAKEYMDKGELV. AMP is bound by residues threonine 31, arginine 36, 57-59, 85-88, and glutamine 92; these read ELV and GFPR. Residues 126 to 163 form an LID region; that stretch reads YRRTCRNCGAVYHLIYAPPKEDNKCDKCGGELYQRDDD. Arginine 127 contributes to the ATP binding site. Residues cysteine 130 and cysteine 133 each coordinate Zn(2+). 136 to 137 serves as a coordination point for ATP; sequence VY. Cysteine 150 and cysteine 153 together coordinate Zn(2+). Residues arginine 160 and arginine 171 each coordinate AMP. Lysine 199 contacts ATP.

The protein belongs to the adenylate kinase family. As to quaternary structure, monomer.

Its subcellular location is the cytoplasm. It catalyses the reaction AMP + ATP = 2 ADP. The protein operates within purine metabolism; AMP biosynthesis via salvage pathway; AMP from ADP: step 1/1. Catalyzes the reversible transfer of the terminal phosphate group between ATP and AMP. Plays an important role in cellular energy homeostasis and in adenine nucleotide metabolism. In Archaeoglobus fulgidus (strain ATCC 49558 / DSM 4304 / JCM 9628 / NBRC 100126 / VC-16), this protein is Adenylate kinase.